A 157-amino-acid polypeptide reads, in one-letter code: Large ribosomal subunit protein uL15 (157 aa).

Positions 1–40 are disordered; it reads MKLHELSDNPGATKKRMRIGRGPGSGKGKMGGRGIKGQKS. Over residues 21-35 the composition is skewed to gly residues; sequence RGPGSGKGKMGGRGI.

It belongs to the universal ribosomal protein uL15 family. In terms of assembly, part of the 50S ribosomal subunit.

Functionally, binds to the 23S rRNA. This is Large ribosomal subunit protein uL15 from Ruegeria pomeroyi (strain ATCC 700808 / DSM 15171 / DSS-3) (Silicibacter pomeroyi).